The following is a 120-amino-acid chain: Large ribosomal subunit protein uL18 (120 aa).

Belongs to the universal ribosomal protein uL18 family. In terms of assembly, part of the 50S ribosomal subunit; part of the 5S rRNA/L5/L18/L25 subcomplex. Contacts the 5S and 23S rRNAs.

Its function is as follows. This is one of the proteins that bind and probably mediate the attachment of the 5S RNA into the large ribosomal subunit, where it forms part of the central protuberance. This is Large ribosomal subunit protein uL18 from Bacillus licheniformis (strain ATCC 14580 / DSM 13 / JCM 2505 / CCUG 7422 / NBRC 12200 / NCIMB 9375 / NCTC 10341 / NRRL NRS-1264 / Gibson 46).